Here is a 341-residue protein sequence, read N- to C-terminus: Probable membrane-associated kinase regulator 1 (341 aa).

5 disordered regions span residues Met1–Asn29, Thr67–Pro122, Pro158–Ser185, Leu206–Arg230, and Arg288–Ser310. Composition is skewed to low complexity over residues Pro12–Asn29, Thr67–Leu108, and Ser167–Ser180. Residues Pro208–Arg230 are compositionally biased toward polar residues. Residues Ser297–Ser310 are compositionally biased toward low complexity.

As to quaternary structure, a C-terminus-derived peptide binds BRI1 in vitro.

Its subcellular location is the cell membrane. Functionally, may negatively regulate brassinosteroid signaling. This Arabidopsis thaliana (Mouse-ear cress) protein is Probable membrane-associated kinase regulator 1 (MAKR1).